A 378-amino-acid polypeptide reads, in one-letter code: Histone deacetylase 8 (378 aa).

Residues 15 to 325 are histone deacetylase; that stretch reads RSVVYVYSPE…WTYLTGTVLG (311 aa). Asp-102 contacts substrate. His-144 acts as the Proton acceptor in catalysis. Substrate is bound at residue Gly-152. 3 residues coordinate a divalent metal cation: Asp-179, His-181, and Asp-268. Tyr-307 serves as a coordination point for substrate.

Belongs to the histone deacetylase family. HD type 1 subfamily. Requires a divalent metal cation as cofactor.

It is found in the nucleus. The protein resides in the chromosome. It localises to the cytoplasm. The catalysed reaction is N(6)-acetyl-L-lysyl-[histone] + H2O = L-lysyl-[histone] + acetate. It catalyses the reaction N(6)-acetyl-L-lysyl-[protein] + H2O = L-lysyl-[protein] + acetate. It carries out the reaction N(6)-(2E)-butenoyl-L-lysyl-[protein] + H2O = (2E)-2-butenoate + L-lysyl-[protein]. With respect to regulation, its activity is inhibited by trichostatin A (TSA) and butyrate, 2 well known histone deacetylase inhibitors. In terms of biological role, histone deacetylase that catalyzes the deacetylation of lysine residues on the N-terminal part of the core histones (H2A, H2B, H3 and H4). Histone deacetylation gives a tag for epigenetic repression and plays an important role in transcriptional regulation, cell cycle progression and developmental events. Histone deacetylases act via the formation of large multiprotein complexes. Also involved in the deacetylation of non-histone proteins. In addition to protein deacetylase activity, also has protein-lysine deacylase activity: acts as a protein decrotonylase by mediating decrotonylation ((2E)-butenoyl) of histones. This is Histone deacetylase 8 (hdac8) from Danio rerio (Zebrafish).